The chain runs to 476 residues: tRNA(Ile)-lysidine synthase (476 aa).

Position 25–30 (Ser-25–Ser-30) interacts with ATP.

This sequence belongs to the tRNA(Ile)-lysidine synthase family.

The protein localises to the cytoplasm. The enzyme catalyses cytidine(34) in tRNA(Ile2) + L-lysine + ATP = lysidine(34) in tRNA(Ile2) + AMP + diphosphate + H(+). Its function is as follows. Ligates lysine onto the cytidine present at position 34 of the AUA codon-specific tRNA(Ile) that contains the anticodon CAU, in an ATP-dependent manner. Cytidine is converted to lysidine, thus changing the amino acid specificity of the tRNA from methionine to isoleucine. This is tRNA(Ile)-lysidine synthase from Bacillus licheniformis (strain ATCC 14580 / DSM 13 / JCM 2505 / CCUG 7422 / NBRC 12200 / NCIMB 9375 / NCTC 10341 / NRRL NRS-1264 / Gibson 46).